The chain runs to 156 residues: Small ribosomal subunit protein uS7 (156 aa).

Belongs to the universal ribosomal protein uS7 family. In terms of assembly, part of the 30S ribosomal subunit. Contacts proteins S9 and S11.

Functionally, one of the primary rRNA binding proteins, it binds directly to 16S rRNA where it nucleates assembly of the head domain of the 30S subunit. Is located at the subunit interface close to the decoding center, probably blocks exit of the E-site tRNA. The polypeptide is Small ribosomal subunit protein uS7 (Prochlorococcus marinus (strain MIT 9312)).